Consider the following 555-residue polypeptide: Glutamine--tRNA ligase (555 aa).

The short motif at Pro-34 to His-44 is the 'HIGH' region element. Residues Glu-35 to Asn-37 and His-41 to Ser-47 each bind ATP. The L-glutamine site is built by Asp-67 and Tyr-212. ATP contacts are provided by residues Thr-231, Arg-261 to Leu-262, and Leu-269 to Lys-271. Residues Val-268–Arg-272 carry the 'KMSKS' region motif.

This sequence belongs to the class-I aminoacyl-tRNA synthetase family. In terms of assembly, monomer.

It is found in the cytoplasm. It catalyses the reaction tRNA(Gln) + L-glutamine + ATP = L-glutaminyl-tRNA(Gln) + AMP + diphosphate. The polypeptide is Glutamine--tRNA ligase (Alteromonas mediterranea (strain DSM 17117 / CIP 110805 / LMG 28347 / Deep ecotype)).